The primary structure comprises 276 residues: Formamidopyrimidine-DNA glycosylase (276 aa).

The active-site Schiff-base intermediate with DNA is the proline 2. Glutamate 3 serves as the catalytic Proton donor. The Proton donor; for beta-elimination activity role is filled by lysine 59. The DNA site is built by histidine 93, arginine 112, and arginine 155. Residues 240–274 form an FPG-type zinc finger; the sequence is QVYNREGKPCPRCGDKIAKKKVGGRSSYYCPTCQK. The active-site Proton donor; for delta-elimination activity is arginine 264.

Belongs to the FPG family. In terms of assembly, monomer. The cofactor is Zn(2+).

The enzyme catalyses Hydrolysis of DNA containing ring-opened 7-methylguanine residues, releasing 2,6-diamino-4-hydroxy-5-(N-methyl)formamidopyrimidine.. It carries out the reaction 2'-deoxyribonucleotide-(2'-deoxyribose 5'-phosphate)-2'-deoxyribonucleotide-DNA = a 3'-end 2'-deoxyribonucleotide-(2,3-dehydro-2,3-deoxyribose 5'-phosphate)-DNA + a 5'-end 5'-phospho-2'-deoxyribonucleoside-DNA + H(+). In terms of biological role, involved in base excision repair of DNA damaged by oxidation or by mutagenic agents. Acts as a DNA glycosylase that recognizes and removes damaged bases. Has a preference for oxidized purines, such as 7,8-dihydro-8-oxoguanine (8-oxoG). Has AP (apurinic/apyrimidinic) lyase activity and introduces nicks in the DNA strand. Cleaves the DNA backbone by beta-delta elimination to generate a single-strand break at the site of the removed base with both 3'- and 5'-phosphates. The chain is Formamidopyrimidine-DNA glycosylase from Pelotomaculum thermopropionicum (strain DSM 13744 / JCM 10971 / SI).